Consider the following 444-residue polypeptide: Putative GTP cyclohydrolase URC1 (444 aa).

A GTP-binding site is contributed by 268–272; that stretch reads RVHDE. Zn(2+) contacts are provided by cysteine 273, cysteine 284, and cysteine 286. 315-317 contacts GTP; that stretch reads EGR. The active-site Proton acceptor is the aspartate 353. Arginine 355 serves as the catalytic Nucleophile. Residues serine 377 and lysine 382 each coordinate GTP.

The protein belongs to the GTP cyclohydrolase II family.

The protein localises to the cytoplasm. It localises to the nucleus. Involved in uracil catabolism. The sequence is that of Putative GTP cyclohydrolase URC1 (URC1) from Lachancea kluyveri (Yeast).